A 588-amino-acid polypeptide reads, in one-letter code: Phosphoinositide phosphatase SAC8 (588 aa).

A disordered region spans residues 37 to 56 (FSVNRRDGNIKPLDENASSG). Over residues 40-50 (NRRDGNIKPLD) the composition is skewed to basic and acidic residues. An SAC domain is found at 129–455 (LQALETTPGL…GDEVSLQYAG (327 aa)). The Phosphatase catalytic core signature appears at 390–401 (RSNCIDCLDRTN). Transmembrane regions (helical) follow at residues 524–544 (SFLP…SFTI) and 555–575 (LASA…KANG).

As to expression, ubiquitous with a higher level of expression in young seedlings than in other tissues.

It is found in the endoplasmic reticulum membrane. Functionally, phosphoinositide phosphatase that hydrolyzes PtdIns(3)P and PtdIns(4)P. This chain is Phosphoinositide phosphatase SAC8 (SAC8), found in Arabidopsis thaliana (Mouse-ear cress).